We begin with the raw amino-acid sequence, 124 residues long: Photoactive yellow protein (124 aa).

In terms of domain architecture, PAS spans 22–85 (AESLPFGAVL…GEFLKFNRTG (64 aa)). C68 is subject to S-(4-hydroxycinnamyl)cysteine.

It belongs to the photoactive yellow protein family. The 4-hydroxycinnamic acid (p-coumaric acid) chromophore is covalently bound via a thioester linkage.

In terms of biological role, this photoactive protein is a photoreceptor with kinetics similar to that of rhodopsin. The chain is Photoactive yellow protein (pyp) from Rhodobacter capsulatus (strain ATCC BAA-309 / NBRC 16581 / SB1003).